Consider the following 375-residue polypeptide: Queuine tRNA-ribosyltransferase (375 aa).

The Proton acceptor role is filled by Asp89. Substrate contacts are provided by residues 89 to 93 (DSGGF), Asp143, Gln187, and Gly214. An RNA binding region spans residues 245–251 (GVGKPED). The active-site Nucleophile is Asp264. An RNA binding; important for wobble base 34 recognition region spans residues 269–273 (TRNAR). Cys302, Cys304, Cys307, and His333 together coordinate Zn(2+).

It belongs to the queuine tRNA-ribosyltransferase family. Homodimer. Within each dimer, one monomer is responsible for RNA recognition and catalysis, while the other monomer binds to the replacement base PreQ1. It depends on Zn(2+) as a cofactor.

It catalyses the reaction 7-aminomethyl-7-carbaguanine + guanosine(34) in tRNA = 7-aminomethyl-7-carbaguanosine(34) in tRNA + guanine. Its pathway is tRNA modification; tRNA-queuosine biosynthesis. Catalyzes the base-exchange of a guanine (G) residue with the queuine precursor 7-aminomethyl-7-deazaguanine (PreQ1) at position 34 (anticodon wobble position) in tRNAs with GU(N) anticodons (tRNA-Asp, -Asn, -His and -Tyr). Catalysis occurs through a double-displacement mechanism. The nucleophile active site attacks the C1' of nucleotide 34 to detach the guanine base from the RNA, forming a covalent enzyme-RNA intermediate. The proton acceptor active site deprotonates the incoming PreQ1, allowing a nucleophilic attack on the C1' of the ribose to form the product. After dissociation, two additional enzymatic reactions on the tRNA convert PreQ1 to queuine (Q), resulting in the hypermodified nucleoside queuosine (7-(((4,5-cis-dihydroxy-2-cyclopenten-1-yl)amino)methyl)-7-deazaguanosine). The sequence is that of Queuine tRNA-ribosyltransferase from Shigella flexneri serotype 5b (strain 8401).